The following is a 238-amino-acid chain: Mannose-binding protein A (238 aa).

Positions Met-1 to Ser-17 are cleaved as a signal peptide. A compositionally biased stretch (basic and acidic residues) spans Asp-38–Glu-49. Positions Asp-38–Asp-87 are disordered. Residues Gly-39–Ser-88 form the Collagen-like domain. A 4-hydroxyproline modification is found at Pro-43. A 5-hydroxylysine mark is found at Lys-44 and Lys-47. O-linked (Gal...) hydroxylysine glycans are attached at residues Lys-44 and Lys-47. A 4-hydroxyproline mark is found at Pro-50, Pro-61, Pro-67, Pro-73, and Pro-78. 5-hydroxylysine occurs at positions 79 and 82. 2 O-linked (Gal...) hydroxylysine glycosylation sites follow: Lys-79 and Lys-82. One can recognise a C-type lectin domain in the interval Ala-143–Ala-238. 2 disulfides stabilise this stretch: Cys-145-Cys-234 and Cys-212-Cys-226. 9 residues coordinate Ca(2+): Asp-178, Glu-182, Glu-202, Asn-204, Asp-205, Glu-210, Asp-211, Asn-222, and Asp-223. Residues Glu-202–Glu-210 are calcium-dependent carbohydrate binding.

As to quaternary structure, homotrimer. Forms higher oligomeric complexes formed by the association of two, three or more homotrimers. Oligomerization occurs in the endoplasmic reticulum. Interacts with MASP1 and MASP2. Post-translationally, hydroxylated on lysine and proline residues within the collagen-like domain. O-glycosylated. O-linked glycans on hydroxylysine residues consist of Glc-Gal disaccharides bound to the oxygen atom of post-translationally added hydroxyl groups. Detected in blood serum (at protein level).

The protein resides in the secreted. Functionally, calcium-dependent lectin. Plays a role in the innate immune response by binding mannose, fucose and N-acetylglucosamine moieties on different microorganisms and mediating activation of the lectin complement pathway. Binds to late apoptotic cells, as well as to apoptotic blebs and to necrotic cells, but not to early apoptotic cells, facilitating their uptake by macrophages. In Rattus norvegicus (Rat), this protein is Mannose-binding protein A (Mbl1).